A 490-amino-acid chain; its full sequence is GTPase Der (490 aa).

2 EngA-type G domains span residues 3–166 (PVVA…MEDL) and 203–376 (IKLA…DSST). GTP is bound by residues 9 to 16 (GRPNVGKS), 56 to 60 (DTGGI), 118 to 121 (NKID), 209 to 216 (GRPNVGKS), 256 to 260 (DTAGV), and 321 to 324 (NKWD). One can recognise a KH-like domain in the interval 377-461 (RRVGTSMLTR…PIRIQFKEGE (85 aa)).

This sequence belongs to the TRAFAC class TrmE-Era-EngA-EngB-Septin-like GTPase superfamily. EngA (Der) GTPase family. In terms of assembly, associates with the 50S ribosomal subunit.

Functionally, GTPase that plays an essential role in the late steps of ribosome biogenesis. This Shigella boydii serotype 18 (strain CDC 3083-94 / BS512) protein is GTPase Der.